Reading from the N-terminus, the 238-residue chain is Tabinhibitin 5 (238 aa).

The signal sequence occupies residues 1–23 (MTSILVSRFLLAALVLQYATIDA). Residues 32–34 (RGD) carry the Cell attachment site motif. One can recognise an SCP domain in the interval 67-211 (LSKINDVRDH…KARALLTCNF (145 aa)).

It belongs to the CRISP family. Expressed in salivary glands.

The protein localises to the secreted. Functionally, inhibits platelet aggregation induced by all agonists tested (ADP, arachidonic acid, the thromboxane A2 analog U46619, thrombin, and snake venom snaclecs (TMVA that activates platelet through GPIB, and stejnulxin that specifically acts through GPVI (GP6))). May act by competing with fibrinogen for binding to glycoprotein IIb/IIIa (ITGA2B/ITGB3). The protein is Tabinhibitin 5 of Tabanus yao (Horsefly).